A 378-amino-acid chain; its full sequence is Ribosomal RNA large subunit methyltransferase G (378 aa).

The protein belongs to the methyltransferase superfamily. RlmG family.

The protein resides in the cytoplasm. It catalyses the reaction guanosine(1835) in 23S rRNA + S-adenosyl-L-methionine = N(2)-methylguanosine(1835) in 23S rRNA + S-adenosyl-L-homocysteine + H(+). Functionally, specifically methylates the guanine in position 1835 (m2G1835) of 23S rRNA. The protein is Ribosomal RNA large subunit methyltransferase G of Shewanella sp. (strain W3-18-1).